The sequence spans 103 residues: Protamine-2 (103 aa).

The tract at residues 1 to 103 (MVRYRMRSLS…RTRRRRCRRH (103 aa)) is disordered. S8 and S10 each carry phosphoserine. The span at 8–17 (SLSERPHEVH) shows a compositional bias: basic and acidic residues. Residues 18–29 (GQQVHGQDQGHN) are compositionally biased toward low complexity. The span at 48-103 (HRGHSHHRRRRCSRRRLHRIHRRRHRSCRRRRRRSCRHRRRHRRGCRTRRRRCRRH) shows a compositional bias: basic residues.

It belongs to the protamine P2 family. As to quaternary structure, interacts with TDRP. Proteolytic processing into mature chains is required for histone eviction during spermatogenesis. Transition proteins (TNP1 and TNP2) are required for processing. Testis.

It is found in the nucleus. Its subcellular location is the chromosome. Protamines substitute for histones in the chromatin of sperm during the haploid phase of spermatogenesis. They compact sperm DNA into a highly condensed, stable and inactive complex. The polypeptide is Protamine-2 (PRM2) (Macaca nemestrina (Pig-tailed macaque)).